A 209-amino-acid polypeptide reads, in one-letter code: Cytidylate kinase (209 aa).

7-15 (GVAASGKSS) is a binding site for ATP.

This sequence belongs to the cytidylate kinase family. Type 1 subfamily.

It localises to the cytoplasm. It catalyses the reaction CMP + ATP = CDP + ADP. The catalysed reaction is dCMP + ATP = dCDP + ADP. This chain is Cytidylate kinase, found in Deinococcus geothermalis (strain DSM 11300 / CIP 105573 / AG-3a).